Here is a 313-residue protein sequence, read N- to C-terminus: D-alanine--D-alanine ligase (313 aa).

The 197-residue stretch at 107-303 (KQAFAAAGLT…FEALVEQIAC (197 aa)) folds into the ATP-grasp domain. ATP is bound at residue 135-188 (PFGLPVVVKPVQEGSSVGVTIVKKPEDLQAALDEAFRYDTLVLVEKYIKGQEVQ). Asp-256, Glu-269, and Asn-271 together coordinate Mg(2+).

This sequence belongs to the D-alanine--D-alanine ligase family. Mg(2+) serves as cofactor. The cofactor is Mn(2+).

The protein resides in the cytoplasm. The enzyme catalyses 2 D-alanine + ATP = D-alanyl-D-alanine + ADP + phosphate + H(+). Its pathway is cell wall biogenesis; peptidoglycan biosynthesis. Cell wall formation. The polypeptide is D-alanine--D-alanine ligase (Trichlorobacter lovleyi (strain ATCC BAA-1151 / DSM 17278 / SZ) (Geobacter lovleyi)).